We begin with the raw amino-acid sequence, 347 residues long: D-fructose 1,6-bisphosphatase class 2/sedoheptulose 1,7-bisphosphatase (347 aa).

4 residues coordinate Mn(2+): Asp33, Glu57, Asp97, and Glu100. Substrate contacts are provided by residues 100-102 (EGT), Tyr131, 176-178 (RDR), and 198-200 (DGD). Glu225 contacts Mn(2+).

Belongs to the FBPase class 2 family. In terms of assembly, homotetramer. Mn(2+) is required as a cofactor.

It catalyses the reaction beta-D-fructose 1,6-bisphosphate + H2O = beta-D-fructose 6-phosphate + phosphate. The catalysed reaction is D-sedoheptulose 1,7-bisphosphate + H2O = D-sedoheptulose 7-phosphate + phosphate. Its pathway is carbohydrate biosynthesis; Calvin cycle. Functionally, catalyzes the hydrolysis of fructose 1,6-bisphosphate (Fru 1,6-P2) and sedoheptulose 1,7-bisphosphate (Sed 1,7-P2) to fructose 6-phosphate and sedoheptulose 7-phosphate, respectively. The chain is D-fructose 1,6-bisphosphatase class 2/sedoheptulose 1,7-bisphosphatase from Thermosynechococcus vestitus (strain NIES-2133 / IAM M-273 / BP-1).